We begin with the raw amino-acid sequence, 191 residues long: MNHEEQKVEAMEQVEAQPVEPTDVDSEVTAEQARIAELEAQLDAAQQASLEERERAIRAVAEMENLRRRAAQDVEKAHKFALEKFAAELLPVLDNLERAIELADKENEALKPMIEGVELTLKSMQSSVGKFGLNPLDPLNQPFDPNAHQAMSMIENAELAPNTVIAVMQKGYELNGRVIRPAMVMVSKAPA.

The segment covering 1–10 (MNHEEQKVEA) has biased composition (basic and acidic residues). A disordered region spans residues 1-28 (MNHEEQKVEAMEQVEAQPVEPTDVDSEV).

This sequence belongs to the GrpE family. In terms of assembly, homodimer.

It localises to the cytoplasm. Its function is as follows. Participates actively in the response to hyperosmotic and heat shock by preventing the aggregation of stress-denatured proteins, in association with DnaK and GrpE. It is the nucleotide exchange factor for DnaK and may function as a thermosensor. Unfolded proteins bind initially to DnaJ; upon interaction with the DnaJ-bound protein, DnaK hydrolyzes its bound ATP, resulting in the formation of a stable complex. GrpE releases ADP from DnaK; ATP binding to DnaK triggers the release of the substrate protein, thus completing the reaction cycle. Several rounds of ATP-dependent interactions between DnaJ, DnaK and GrpE are required for fully efficient folding. In Aeromonas hydrophila subsp. hydrophila (strain ATCC 7966 / DSM 30187 / BCRC 13018 / CCUG 14551 / JCM 1027 / KCTC 2358 / NCIMB 9240 / NCTC 8049), this protein is Protein GrpE.